The chain runs to 85 residues: uncharacterized protein (85 aa).

Belongs to the ycf76 family.

The protein resides in the plastid. Its subcellular location is the chloroplast. This is an uncharacterized protein from Zea mays (Maize).